A 403-amino-acid polypeptide reads, in one-letter code: Glyceraldehyde-3-phosphate dehydrogenase A, chloroplastic (403 aa).

The transit peptide at 1–66 directs the protein to the chloroplast; the sequence is MASSMLSATT…GGPRRAPTEA (66 aa). NADP(+) contacts are provided by residues 77–78, D102, and R147; that span reads RI. D-glyceraldehyde 3-phosphate-binding positions include 219 to 221, T250, R265, 278 to 279, and R301; these read SCT and TG. Residue C220 is the Nucleophile of the active site. N383 provides a ligand contact to NADP(+).

The protein belongs to the glyceraldehyde-3-phosphate dehydrogenase family. Tetramer of either four A chains (GAPDH 2) or two A and two B chains (GAPDH 1).

It localises to the plastid. The protein resides in the chloroplast. It catalyses the reaction D-glyceraldehyde 3-phosphate + phosphate + NADP(+) = (2R)-3-phospho-glyceroyl phosphate + NADPH + H(+). Its pathway is carbohydrate biosynthesis; Calvin cycle. This chain is Glyceraldehyde-3-phosphate dehydrogenase A, chloroplastic (GAPA), found in Zea mays (Maize).